The primary structure comprises 510 residues: Chromosomal replication initiator protein DnaA (510 aa).

A domain I, interacts with DnaA modulators region spans residues 1 to 74; the sequence is MHTDLWERGC…EATLSELAGK (74 aa). A domain II region spans residues 74 to 173; sequence KPVRLELSLL…PTLSPAVSRG (100 aa). A disordered region spans residues 125 to 168; the sequence is ARHDPQSVVPTPGGSANGRAAPRVGEPGGPVGTSTLPVAPTLSP. The domain III, AAA+ region stretch occupies residues 174–390; it reads RLNPALTFDT…GALRKVLAYS (217 aa). ATP contacts are provided by Gly218, Gly220, Lys221, and Thr222. The interval 391-510 is domain IV, binds dsDNA; it reads RFSHKEISIN…LHVLEQTLKG (120 aa).

Belongs to the DnaA family. As to quaternary structure, oligomerizes as a right-handed, spiral filament on DNA at oriC.

It localises to the cytoplasm. Functionally, plays an essential role in the initiation and regulation of chromosomal replication. ATP-DnaA binds to the origin of replication (oriC) to initiate formation of the DNA replication initiation complex once per cell cycle. Binds the DnaA box (a 9 base pair repeat at the origin) and separates the double-stranded (ds)DNA. Forms a right-handed helical filament on oriC DNA; dsDNA binds to the exterior of the filament while single-stranded (ss)DNA is stabiized in the filament's interior. The ATP-DnaA-oriC complex binds and stabilizes one strand of the AT-rich DNA unwinding element (DUE), permitting loading of DNA polymerase. After initiation quickly degrades to an ADP-DnaA complex that is not apt for DNA replication. Binds acidic phospholipids. The chain is Chromosomal replication initiator protein DnaA from Leptothrix cholodnii (strain ATCC 51168 / LMG 8142 / SP-6) (Leptothrix discophora (strain SP-6)).